Reading from the N-terminus, the 361-residue chain is MKPSIHSLVHQTMQEWVLEQGEKKFRADQIWEWLYRKRVQSFEEMTNLSKDLIAKLNDQFVVNPLKQRIVQESADGTVKYLFELPDGMLIETVLMRQHYGLSVCVTTQVGCNIGCTFCASGLIKKQRDLNNGEIVAQIMLVQKYFDERGQDERISHIVVMGIGEPFDNYNNVLNFFRTINDDKGMAIGARHITVSTSGLAHKIRDFADEGVQVNLAVSLHAPNNELRSSIMKINRAFPIEKLFAAIEYYIETTNRRVTFEYIMLNEVNDGVEQALELTELLKNIKKLSYVNLIPYNPVSEHDQYSRSPKECVLAFYDTLKKKGVNCVVRQEHGTDIDAACGQLRSNTMKRDRQKAVAAVNP.

Glu-91 (proton acceptor) is an active-site residue. The Radical SAM core domain maps to 97-329; it reads QHYGLSVCVT…KKKGVNCVVR (233 aa). An intrachain disulfide couples Cys-104 to Cys-340. [4Fe-4S] cluster contacts are provided by Cys-111, Cys-115, and Cys-118. Residues 163–164, Ser-195, 218–220, and Asn-296 contribute to the S-adenosyl-L-methionine site; these read GE and SLH. Cys-340 serves as the catalytic S-methylcysteine intermediate.

The protein belongs to the radical SAM superfamily. RlmN family. Requires [4Fe-4S] cluster as cofactor.

The protein localises to the cytoplasm. It carries out the reaction adenosine(2503) in 23S rRNA + 2 reduced [2Fe-2S]-[ferredoxin] + 2 S-adenosyl-L-methionine = 2-methyladenosine(2503) in 23S rRNA + 5'-deoxyadenosine + L-methionine + 2 oxidized [2Fe-2S]-[ferredoxin] + S-adenosyl-L-homocysteine. It catalyses the reaction adenosine(37) in tRNA + 2 reduced [2Fe-2S]-[ferredoxin] + 2 S-adenosyl-L-methionine = 2-methyladenosine(37) in tRNA + 5'-deoxyadenosine + L-methionine + 2 oxidized [2Fe-2S]-[ferredoxin] + S-adenosyl-L-homocysteine. Specifically methylates position 2 of adenine 2503 in 23S rRNA and position 2 of adenine 37 in tRNAs. The protein is Probable dual-specificity RNA methyltransferase RlmN of Streptococcus pneumoniae serotype 4 (strain ATCC BAA-334 / TIGR4).